A 245-amino-acid polypeptide reads, in one-letter code: Biosynthetic peptidoglycan transglycosylase (245 aa).

The helical transmembrane segment at 29 to 49 (IVLAVLIVLILPYALIVFYLL) threads the bilayer.

Belongs to the glycosyltransferase 51 family.

It is found in the cell inner membrane. It carries out the reaction [GlcNAc-(1-&gt;4)-Mur2Ac(oyl-L-Ala-gamma-D-Glu-L-Lys-D-Ala-D-Ala)](n)-di-trans,octa-cis-undecaprenyl diphosphate + beta-D-GlcNAc-(1-&gt;4)-Mur2Ac(oyl-L-Ala-gamma-D-Glu-L-Lys-D-Ala-D-Ala)-di-trans,octa-cis-undecaprenyl diphosphate = [GlcNAc-(1-&gt;4)-Mur2Ac(oyl-L-Ala-gamma-D-Glu-L-Lys-D-Ala-D-Ala)](n+1)-di-trans,octa-cis-undecaprenyl diphosphate + di-trans,octa-cis-undecaprenyl diphosphate + H(+). It functions in the pathway cell wall biogenesis; peptidoglycan biosynthesis. In terms of biological role, peptidoglycan polymerase that catalyzes glycan chain elongation from lipid-linked precursors. The chain is Biosynthetic peptidoglycan transglycosylase from Rhizobium johnstonii (strain DSM 114642 / LMG 32736 / 3841) (Rhizobium leguminosarum bv. viciae).